We begin with the raw amino-acid sequence, 136 residues long: Small ribosomal subunit protein uS11 (136 aa).

Disordered regions lie at residues 1–20 (MAQR…NVTN) and 115–136 (VTPQ…EKAR). Over residues 125–136 (PPKRVLKREKAR) the composition is skewed to basic residues.

This sequence belongs to the universal ribosomal protein uS11 family. Part of the 30S ribosomal subunit. Interacts with proteins S7 and S18. Binds to IF-3.

Its function is as follows. Located on the platform of the 30S subunit, it bridges several disparate RNA helices of the 16S rRNA. Forms part of the Shine-Dalgarno cleft in the 70S ribosome. The chain is Small ribosomal subunit protein uS11 from Mycoplasmopsis pulmonis (strain UAB CTIP) (Mycoplasma pulmonis).